The sequence spans 39 residues: Large ribosomal subunit protein bL36 (39 aa).

Belongs to the bacterial ribosomal protein bL36 family.

The chain is Large ribosomal subunit protein bL36 from Pediococcus pentosaceus (strain ATCC 25745 / CCUG 21536 / LMG 10740 / 183-1w).